We begin with the raw amino-acid sequence, 205 residues long: UPF0301 protein AZC_0488 (205 aa).

This sequence belongs to the UPF0301 (AlgH) family.

This is UPF0301 protein AZC_0488 from Azorhizobium caulinodans (strain ATCC 43989 / DSM 5975 / JCM 20966 / LMG 6465 / NBRC 14845 / NCIMB 13405 / ORS 571).